We begin with the raw amino-acid sequence, 45 residues long: Enterotoxin (45 aa).

As to quaternary structure, one of 3 components (of 35, 45 and 105 kDa) of the enterotoxin.

Its function is as follows. One of 3 components required for cytotoxicity (tested in African green monkey Vero cells); the complex is not hemolytic. The polypeptide is Enterotoxin (Bacillus cereus).